Here is a 208-residue protein sequence, read N- to C-terminus: MVRVKICGVQDPKIGVAAALAGADAIGIVFASSSRRVTPEQAREICQALPPFTARVGIFVDTPQQEVQQIAHFCGLDVIQLHGGESADYCRDLGFRCIKAIPARNRQCLEEANAFPVSALLVDSYVNGKSGGNGCTFNWHLLEGLQLNKPLILAGGLNIENVGRAVAYVRPYGVDVSSGVEVKGQKDIPLIKAFIKRVREVSFNATGS.

The protein belongs to the TrpF family.

The catalysed reaction is N-(5-phospho-beta-D-ribosyl)anthranilate = 1-(2-carboxyphenylamino)-1-deoxy-D-ribulose 5-phosphate. It functions in the pathway amino-acid biosynthesis; L-tryptophan biosynthesis; L-tryptophan from chorismate: step 3/5. The protein is N-(5'-phosphoribosyl)anthranilate isomerase of Desulforamulus reducens (strain ATCC BAA-1160 / DSM 100696 / MI-1) (Desulfotomaculum reducens).